Here is a 203-residue protein sequence, read N- to C-terminus: uncharacterized protein (203 aa).

Residues V180 to I200 form a helical membrane-spanning segment.

The protein resides in the virion. The protein localises to the host membrane. This is an uncharacterized protein from Acanthamoeba polyphaga (Amoeba).